We begin with the raw amino-acid sequence, 534 residues long: Importin subunit alpha-1b (534 aa).

Residues 1 to 58 enclose the IBB domain; that stretch reads MSLRPSERAEVRRSRYKVAVDADEGRRRREDNMVEIRKSRREESLLKKRRDGLPAAAA. 8 ARM repeats span residues 111 to 151, 154 to 193, 196 to 236, 238 to 277, 280 to 319, 322 to 362, 365 to 404, and 408 to 447; these read SPPI…NIAS, SDNT…NVAG, PKCR…NFCR, KPQP…YLSD, NDKI…NIVT, DMQT…NITA, REQI…NATS, and HDQI…NILK. The segment at 505-534 is disordered; the sequence is DAMPSGDNAQNGFNFGNQQPNVPSGGFNFG. The segment covering 514 to 523 has biased composition (low complexity); sequence QNGFNFGNQQ.

The protein belongs to the importin alpha family. Forms a complex with importin subunit beta-1. The whole complex, most stable and composed of importin alpha and importin beta, is referred to as PTAC or pore targeting complex. In terms of tissue distribution, highly expressed in root and weakly in callus, etiolated leaf and green leaf.

It localises to the cytoplasm. The protein localises to the perinuclear region. Its function is as follows. Functions in nuclear protein import. Binds specifically and directly to substrates containing either a simple or bipartite NLS motif. Promotes docking of import substrates to the nuclear envelope. In conjunction with importin beta-1, mediates the nuclear envelope docking, and the subsequent translocation into the nucleus of the constitutive morphogenetic 1 (COP1) protein containing bipartite NLS motif. This Oryza sativa subsp. japonica (Rice) protein is Importin subunit alpha-1b.